Reading from the N-terminus, the 201-residue chain is Recombination protein RecR (201 aa).

The C4-type zinc-finger motif lies at 57–72 (CADCRTFTEQEVCNIC). Residues 81–176 (GQICVVESPA…EASRIAHGVP (96 aa)) form the Toprim domain.

Belongs to the RecR family.

Its function is as follows. May play a role in DNA repair. It seems to be involved in an RecBC-independent recombinational process of DNA repair. It may act with RecF and RecO. The polypeptide is Recombination protein RecR (Escherichia coli O17:K52:H18 (strain UMN026 / ExPEC)).